The sequence spans 931 residues: Protein translocase subunit SecA (931 aa).

Residues Gln87, 105 to 109 (GEGKT), and Asp523 each bind ATP. Zn(2+)-binding residues include Cys915, Cys917, Cys926, and His927.

It belongs to the SecA family. In terms of assembly, monomer and homodimer. Part of the essential Sec protein translocation apparatus which comprises SecA, SecYEG and auxiliary proteins SecDF-YajC and YidC. Zn(2+) serves as cofactor.

It is found in the cell inner membrane. It localises to the cytoplasm. It catalyses the reaction ATP + H2O + cellular proteinSide 1 = ADP + phosphate + cellular proteinSide 2.. Functionally, part of the Sec protein translocase complex. Interacts with the SecYEG preprotein conducting channel. Has a central role in coupling the hydrolysis of ATP to the transfer of proteins into and across the cell membrane, serving both as a receptor for the preprotein-SecB complex and as an ATP-driven molecular motor driving the stepwise translocation of polypeptide chains across the membrane. The chain is Protein translocase subunit SecA from Xanthobacter autotrophicus (strain ATCC BAA-1158 / Py2).